The primary structure comprises 346 residues: Flap endonuclease 1 (346 aa).

The tract at residues 1–102 (MGVTELGKLI…AEIEERRKVK (102 aa)) is N-domain. Residues aspartate 31, aspartate 84, glutamate 156, glutamate 158, aspartate 177, aspartate 179, and aspartate 239 each coordinate Mg(2+). The interval 120–261 (DVAKYMKRAV…KALKLVWEFG (142 aa)) is I-domain.

This sequence belongs to the XPG/RAD2 endonuclease family. FEN1 subfamily. In terms of assembly, interacts with PCNA. PCNA stimulates the nuclease activity without altering cleavage specificity. Requires Mg(2+) as cofactor.

In terms of biological role, structure-specific nuclease with 5'-flap endonuclease and 5'-3' exonuclease activities involved in DNA replication and repair. During DNA replication, cleaves the 5'-overhanging flap structure that is generated by displacement synthesis when DNA polymerase encounters the 5'-end of a downstream Okazaki fragment. Binds the unpaired 3'-DNA end and kinks the DNA to facilitate 5' cleavage specificity. Cleaves one nucleotide into the double-stranded DNA from the junction in flap DNA, leaving a nick for ligation. Also involved in the base excision repair (BER) pathway. Acts as a genome stabilization factor that prevents flaps from equilibrating into structures that lead to duplications and deletions. Also possesses 5'-3' exonuclease activity on nicked or gapped double-stranded DNA. This Pyrobaculum islandicum (strain DSM 4184 / JCM 9189 / GEO3) protein is Flap endonuclease 1.